The chain runs to 207 residues: 3-isopropylmalate dehydratase small subunit (207 aa).

It belongs to the LeuD family. LeuD type 1 subfamily. In terms of assembly, heterodimer of LeuC and LeuD.

It catalyses the reaction (2R,3S)-3-isopropylmalate = (2S)-2-isopropylmalate. It functions in the pathway amino-acid biosynthesis; L-leucine biosynthesis; L-leucine from 3-methyl-2-oxobutanoate: step 2/4. Its function is as follows. Catalyzes the isomerization between 2-isopropylmalate and 3-isopropylmalate, via the formation of 2-isopropylmaleate. The chain is 3-isopropylmalate dehydratase small subunit (leuD) from Buchnera aphidicola subsp. Pterocomma populeum.